A 162-amino-acid polypeptide reads, in one-letter code: Corticoliberin-2 (162 aa).

A signal peptide spans 1–24; sequence MRLNFLVTTMALLVAFPPPYECRA. The propeptide occupies 25–119; the sequence is IDSSSNQPVT…ALDSEERERR (95 aa). A disordered region spans residues 57–79; sequence LGNRNKNSPRSPPDTYPEASQYS. A Phenylalanine amide modification is found at Phe160.

It belongs to the sauvagine/corticotropin-releasing factor/urotensin I family.

The protein resides in the secreted. Its function is as follows. This hormone from hypothalamus regulates the release of corticotropin from pituitary gland. The sequence is that of Corticoliberin-2 (crf2) from Catostomus commersonii (White sucker).